The sequence spans 98 residues: Cystatin-B (98 aa).

Met1 is modified (N-acetylmethionine). The Secondary area of contact signature appears at 46–50 (QVVAG).

It belongs to the cystatin family. In terms of assembly, able to form dimers stabilized by noncovalent forces.

The protein localises to the cytoplasm. Its subcellular location is the nucleus. In terms of biological role, this is an intracellular thiol proteinase inhibitor. Tightly binding reversible inhibitor of cathepsins L, H and B. The sequence is that of Cystatin-B (CSTB) from Pan troglodytes (Chimpanzee).